Consider the following 510-residue polypeptide: NAD(P)H-quinone oxidoreductase subunit 2 B, chloroplastic (510 aa).

The next 13 helical transmembrane spans lie at 24–44 (LLLF…GLIL), 57–77 (IPWL…ALLF), 99–119 (IFQF…VEYI), 124–144 (MAIT…MFLC), 149–169 (LITI…LSGY), 183–203 (YLLM…WLYG), 227–247 (PGIS…LSLA), 295–315 (WHLL…LIAI), 323–343 (MLAY…IVGD), 354–374 (YMLF…LFGL), 395–415 (ALSL…AGFF), 418–438 (LHLF…IGLL), and 482–502 (LSMI…NPIV).

The protein belongs to the complex I subunit 2 family. In terms of assembly, NDH is composed of at least 16 different subunits, 5 of which are encoded in the nucleus.

Its subcellular location is the plastid. The protein localises to the chloroplast thylakoid membrane. It catalyses the reaction a plastoquinone + NADH + (n+1) H(+)(in) = a plastoquinol + NAD(+) + n H(+)(out). It carries out the reaction a plastoquinone + NADPH + (n+1) H(+)(in) = a plastoquinol + NADP(+) + n H(+)(out). Functionally, NDH shuttles electrons from NAD(P)H:plastoquinone, via FMN and iron-sulfur (Fe-S) centers, to quinones in the photosynthetic chain and possibly in a chloroplast respiratory chain. The immediate electron acceptor for the enzyme in this species is believed to be plastoquinone. Couples the redox reaction to proton translocation, and thus conserves the redox energy in a proton gradient. This chain is NAD(P)H-quinone oxidoreductase subunit 2 B, chloroplastic, found in Manihot esculenta (Cassava).